The primary structure comprises 124 residues: UPF0738 protein ABC2521 (124 aa).

This sequence belongs to the UPF0738 family.

This chain is UPF0738 protein ABC2521, found in Shouchella clausii (strain KSM-K16) (Alkalihalobacillus clausii).